The following is a 205-amino-acid chain: Probable GTP-binding protein EngB (205 aa).

One can recognise an EngB-type G domain in the interval 27 to 201 (TGIEIAFAGR…AAKLDFWFSP (175 aa)). GTP contacts are provided by residues 35–42 (GRSNAGKS), 62–66 (GRTQL), 80–83 (DLPG), 147–150 (TKAD), and 180–182 (FSA). Mg(2+) is bound by residues serine 42 and threonine 64.

It belongs to the TRAFAC class TrmE-Era-EngA-EngB-Septin-like GTPase superfamily. EngB GTPase family. Requires Mg(2+) as cofactor.

Its function is as follows. Necessary for normal cell division and for the maintenance of normal septation. The polypeptide is Probable GTP-binding protein EngB (Haemophilus influenzae (strain PittEE)).